The sequence spans 553 residues: 2-succinyl-5-enolpyruvyl-6-hydroxy-3-cyclohexene-1-carboxylate synthase (553 aa).

This sequence belongs to the TPP enzyme family. MenD subfamily. In terms of assembly, homodimer. It depends on Mg(2+) as a cofactor. Mn(2+) serves as cofactor. Requires thiamine diphosphate as cofactor.

It catalyses the reaction isochorismate + 2-oxoglutarate + H(+) = 5-enolpyruvoyl-6-hydroxy-2-succinyl-cyclohex-3-ene-1-carboxylate + CO2. It functions in the pathway quinol/quinone metabolism; 1,4-dihydroxy-2-naphthoate biosynthesis; 1,4-dihydroxy-2-naphthoate from chorismate: step 2/7. Its pathway is quinol/quinone metabolism; menaquinone biosynthesis. Its function is as follows. Catalyzes the thiamine diphosphate-dependent decarboxylation of 2-oxoglutarate and the subsequent addition of the resulting succinic semialdehyde-thiamine pyrophosphate anion to isochorismate to yield 2-succinyl-5-enolpyruvyl-6-hydroxy-3-cyclohexene-1-carboxylate (SEPHCHC). This is 2-succinyl-5-enolpyruvyl-6-hydroxy-3-cyclohexene-1-carboxylate synthase from Thermobifida fusca (strain YX).